The chain runs to 164 residues: 3-isopropylmalate dehydratase small subunit (164 aa).

This sequence belongs to the LeuD family. LeuD type 2 subfamily. As to quaternary structure, heterodimer of LeuC and LeuD.

It carries out the reaction (2R,3S)-3-isopropylmalate = (2S)-2-isopropylmalate. The protein operates within amino-acid biosynthesis; L-leucine biosynthesis; L-leucine from 3-methyl-2-oxobutanoate: step 2/4. Functionally, catalyzes the isomerization between 2-isopropylmalate and 3-isopropylmalate, via the formation of 2-isopropylmaleate. This chain is 3-isopropylmalate dehydratase small subunit, found in Syntrophus aciditrophicus (strain SB).